Reading from the N-terminus, the 931-residue chain is Glycine dehydrogenase (decarboxylating) (931 aa).

Position 684 is an N6-(pyridoxal phosphate)lysine (Lys-684).

The protein belongs to the GcvP family. As to quaternary structure, the glycine cleavage system is composed of four proteins: P, T, L and H. Pyridoxal 5'-phosphate is required as a cofactor.

The catalysed reaction is N(6)-[(R)-lipoyl]-L-lysyl-[glycine-cleavage complex H protein] + glycine + H(+) = N(6)-[(R)-S(8)-aminomethyldihydrolipoyl]-L-lysyl-[glycine-cleavage complex H protein] + CO2. In terms of biological role, the glycine cleavage system catalyzes the degradation of glycine. The P protein binds the alpha-amino group of glycine through its pyridoxal phosphate cofactor; CO(2) is released and the remaining methylamine moiety is then transferred to the lipoamide cofactor of the H protein. This Bartonella henselae (strain ATCC 49882 / DSM 28221 / CCUG 30454 / Houston 1) (Rochalimaea henselae) protein is Glycine dehydrogenase (decarboxylating).